Reading from the N-terminus, the 270-residue chain is Tryptophan synthase alpha chain (270 aa).

Residues Glu-49 and Asp-60 each act as proton acceptor in the active site.

It belongs to the TrpA family. In terms of assembly, tetramer of two alpha and two beta chains.

It carries out the reaction (1S,2R)-1-C-(indol-3-yl)glycerol 3-phosphate + L-serine = D-glyceraldehyde 3-phosphate + L-tryptophan + H2O. It functions in the pathway amino-acid biosynthesis; L-tryptophan biosynthesis; L-tryptophan from chorismate: step 5/5. In terms of biological role, the alpha subunit is responsible for the aldol cleavage of indoleglycerol phosphate to indole and glyceraldehyde 3-phosphate. The sequence is that of Tryptophan synthase alpha chain from Gluconobacter oxydans (strain 621H) (Gluconobacter suboxydans).